Consider the following 1487-residue polypeptide: Chromosome partition protein MukB (1487 aa).

34–41 (GGNGAGKS) is an ATP binding site. Coiled-coil stretches lie at residues 297–426 (SSRE…LEKA), 460–666 (ALKH…RLAS), 781–806 (RAAREQRLELLRSEREEVVEKHAKAA), 836–1111 (EQAL…RTFV), and 1210–1266 (VEAI…LSNI). The tract at residues 667–784 (PGGSNDPRLK…VIPLFGRAAR (118 aa)) is flexible hinge.

It belongs to the SMC family. MukB subfamily. As to quaternary structure, homodimerization via its hinge domain. Binds to DNA via its C-terminal region. Interacts, and probably forms a ternary complex, with MukE and MukF via its C-terminal region. The complex formation is stimulated by calcium or magnesium. Interacts with tubulin-related protein FtsZ.

It is found in the cytoplasm. The protein resides in the nucleoid. Functionally, plays a central role in chromosome condensation, segregation and cell cycle progression. Functions as a homodimer, which is essential for chromosome partition. Involved in negative DNA supercoiling in vivo, and by this means organize and compact chromosomes. May achieve or facilitate chromosome segregation by condensation DNA from both sides of a centrally located replisome during cell division. The protein is Chromosome partition protein MukB of Vibrio vulnificus (strain YJ016).